A 181-amino-acid polypeptide reads, in one-letter code: Resolvase/recombinase (181 aa).

In terms of domain architecture, Resolvase/invertase-type recombinase catalytic spans 2-137 (RLFGYARVST…EGRLEAKAKG (136 aa)). Ser-10 functions as the O-(5'-phospho-DNA)-serine intermediate in the catalytic mechanism. The segment at residues 161–180 (AMEIAKRLKIGRSTVYKVLA) is a DNA-binding region (H-T-H motif).

Belongs to the site-specific recombinase resolvase family.

Functionally, site-specific recombination protein. In Pseudomonas putida (Arthrobacter siderocapsulatus), this protein is Resolvase/recombinase.